The sequence spans 406 residues: Tyrosine--tRNA ligase (406 aa).

Residue Tyr-35 participates in L-tyrosine binding. The 'HIGH' region motif lies at 40–49; the sequence is PTADSLHVGH. 2 residues coordinate L-tyrosine: Tyr-168 and Gln-172. A 'KMSKS' region motif is present at residues 228-232; it reads KMGKT. Residue Lys-231 participates in ATP binding. Positions 340-405 constitute an S4 RNA-binding domain; it reads STVLDVIAKV…GKKNYNKIEI (66 aa).

This sequence belongs to the class-I aminoacyl-tRNA synthetase family. TyrS type 1 subfamily. In terms of assembly, homodimer.

The protein resides in the cytoplasm. It carries out the reaction tRNA(Tyr) + L-tyrosine + ATP = L-tyrosyl-tRNA(Tyr) + AMP + diphosphate + H(+). In terms of biological role, catalyzes the attachment of tyrosine to tRNA(Tyr) in a two-step reaction: tyrosine is first activated by ATP to form Tyr-AMP and then transferred to the acceptor end of tRNA(Tyr). The protein is Tyrosine--tRNA ligase of Clostridium botulinum (strain Eklund 17B / Type B).